Consider the following 190-residue polypeptide: Abscisic acid receptor PYL2 (190 aa).

An START-like region spans residues 28–182 (FEPDPTTCTS…NLQKLGVAAT (155 aa)). Abscisate is bound by residues Lys-64, 93 to 98 (ASTSTE), 120 to 126 (RLKNYKS), and Glu-147. The short motif at 89-93 (SGLPA) is the Gate loop element. The Latch loop motif lies at 119-121 (HRL).

Belongs to the PYR/PYL/RCAR abscisic acid intracellular receptor family. Homodimer. Binds ABA on one subunit only. Interacts with HAB1, ABI1 and ABI2, and possibly with other PP2Cs. Binds to CARs protein in an ABA-independent manner, both at the plasma membrane and in the nucleus.

Its subcellular location is the cytoplasm. The protein localises to the nucleus. It localises to the cell membrane. In terms of biological role, receptor for abscisic acid (ABA) required for ABA-mediated responses such as stomatal closure and germination inhibition. Inhibits the activity of group-A protein phosphatases type 2C (PP2Cs) when activated by ABA. Can be activated by both (-)-ABA and (+)-ABA. This chain is Abscisic acid receptor PYL2 (PYL2), found in Arabidopsis thaliana (Mouse-ear cress).